The chain runs to 471 residues: E3 SUMO-protein ligase EGR2 (471 aa).

Residues 127 to 143 (PASTTASSNVTSASPNP) show a composition bias toward low complexity. Positions 127-177 (PASTTASSNVTSASPNPLATGPLGVCTMSQTQPDLDHLYSPPPPPPYSGCA) are disordered. Lys-246 is subject to N6-acetyllysine; by EP300. Disordered stretches follow at residues 273-301 (GGPS…AAAA) and 313-336 (RPIL…RPYP). Gly residues predominate over residues 280 to 289 (TGPGASGGSE). C2H2-type zinc fingers lie at residues 335 to 359 (YPCP…IRIH), 365 to 387 (FQCR…IRTH), and 393 to 415 (FACD…TKIH). The segment at 406–471 (DERKRHTKIH…GPCSSRTRTP (66 aa)) is disordered. Basic residues predominate over residues 410–420 (RHTKIHLRQKE). Over residues 424 to 437 (SAPSSSVPAASTAS) the composition is skewed to low complexity.

Belongs to the EGR C2H2-type zinc-finger protein family. In terms of assembly, interacts with HCFC1. Interacts with WWP2. Interacts with UBC9. Interacts with CITED1. Interacts (via phosphorylated form) with SFN. In terms of processing, ubiquitinated by WWP2 leading to proteasomal degradation. Post-translationally, acetylated at Lys-246. May be deacetylated by HDAC6, HDAC10 or SIRT1.

The protein localises to the nucleus. It functions in the pathway protein modification; protein sumoylation. Its function is as follows. Sequence-specific DNA-binding transcription factor. Plays a role in hindbrain segmentation by regulating the expression of a subset of homeobox containing genes and in Schwann cell myelination by regulating the expression of genes involved in the formation and maintenance of myelin. Binds to two EGR2-consensus sites EGR2A (5'-CTGTAGGAG-3') and EGR2B (5'-ATGTAGGTG-3') in the HOXB3 enhancer and promotes HOXB3 transcriptional activation. Binds to specific DNA sites located in the promoter region of HOXA4, HOXB2 and ERBB2. Regulates hindbrain segmentation by controlling the expression of Hox genes, such as HOXA4, HOXB3 and HOXB2, and thereby specifying odd and even rhombomeres. Promotes the expression of HOXB3 in the rhombomere r5 in the hindbrain. Regulates myelination in the peripheral nervous system after birth, possibly by regulating the expression of myelin proteins, such as MPZ, and by promoting the differentiation of Schwann cells. Involved in the development of the jaw openener musculature, probably by playing a role in its innervation through trigeminal motor neurons. May play a role in adipogenesis, possibly by regulating the expression of CEBPB. E3 SUMO-protein ligase helping SUMO1 conjugation to its coregulators NAB1 and NAB2, whose sumoylation down-regulates EGR2 transcriptional activity. The chain is E3 SUMO-protein ligase EGR2 (EGR2) from Sus scrofa (Pig).